We begin with the raw amino-acid sequence, 215 residues long: Pyrrolidone-carboxylate peptidase (215 aa).

Active-site residues include E80, C143, and H167.

Belongs to the peptidase C15 family. Homotetramer.

It localises to the cytoplasm. The enzyme catalyses Release of an N-terminal pyroglutamyl group from a polypeptide, the second amino acid generally not being Pro.. In terms of biological role, removes 5-oxoproline from various penultimate amino acid residues except L-proline. The sequence is that of Pyrrolidone-carboxylate peptidase from Bacillus cereus (strain G9842).